The sequence spans 1014 residues: Beta-galactosidase (1014 aa).

E460 (proton donor) is an active-site residue. E527 acts as the Nucleophile in catalysis.

The protein belongs to the glycosyl hydrolase 2 family.

The catalysed reaction is Hydrolysis of terminal non-reducing beta-D-galactose residues in beta-D-galactosides.. The sequence is that of Beta-galactosidase (lacZ) from Halalkalibacterium halodurans (strain ATCC BAA-125 / DSM 18197 / FERM 7344 / JCM 9153 / C-125) (Bacillus halodurans).